The following is a 323-amino-acid chain: Homocysteine S-methyltransferase 1 (323 aa).

The 315-residue stretch at 3–317 (VLEDLVARAG…STIRAVSKIL (315 aa)) folds into the Hcy-binding domain. The Zn(2+) site is built by C235, C302, and C303.

As to quaternary structure, monomer. The cofactor is Zn(2+).

It carries out the reaction S-methyl-L-methionine + L-homocysteine = 2 L-methionine + H(+). In terms of biological role, catalyzes methyl transfer from S-methylmethionine (SMM) to adenosyl-L-homocysteine (AdoMet). SMM degradation (by HMT-1, HMT-2, HMT-3 and HMT-4) and biosynthesis (by MMT1) constitute the SMM cycle in plants, which is probably required to achieve short term control of AdoMet level. The sequence is that of Homocysteine S-methyltransferase 1 (HMT-1) from Zea mays (Maize).